The sequence spans 338 residues: 3-dehydroquinate synthase (338 aa).

This sequence belongs to the archaeal-type DHQ synthase family.

The enzyme catalyses 2-amino-2,3,7-trideoxy-D-lyxo-hept-6-ulosonate + NAD(+) + H2O = 3-dehydroquinate + NH4(+) + NADH + H(+). In terms of biological role, catalyzes the oxidative deamination and cyclization of 2-amino-3,7-dideoxy-D-threo-hept-6-ulosonic acid (ADH) to yield 3-dehydroquinate (DHQ), which is fed into the canonical shikimic pathway of aromatic amino acid biosynthesis. This Cenarchaeum symbiosum (strain A) protein is 3-dehydroquinate synthase.